A 602-amino-acid chain; its full sequence is Aspartate--tRNA(Asp/Asn) ligase (602 aa).

E175 serves as a coordination point for L-aspartate. The interval 199 to 202 is aspartate; that stretch reads QIFK. R221 is an L-aspartate binding site. ATP-binding positions include 221–223 and Q230; that span reads RDE. H458 contacts L-aspartate. ATP is bound at residue E492. R499 is an L-aspartate binding site. Position 544-547 (544-547) interacts with ATP; sequence GLDR.

This sequence belongs to the class-II aminoacyl-tRNA synthetase family. Type 1 subfamily. Homodimer.

It is found in the cytoplasm. It catalyses the reaction tRNA(Asx) + L-aspartate + ATP = L-aspartyl-tRNA(Asx) + AMP + diphosphate. Aspartyl-tRNA synthetase with relaxed tRNA specificity since it is able to aspartylate not only its cognate tRNA(Asp) but also tRNA(Asn). Reaction proceeds in two steps: L-aspartate is first activated by ATP to form Asp-AMP and then transferred to the acceptor end of tRNA(Asp/Asn). This chain is Aspartate--tRNA(Asp/Asn) ligase, found in Cupriavidus pinatubonensis (strain JMP 134 / LMG 1197) (Cupriavidus necator (strain JMP 134)).